A 290-amino-acid chain; its full sequence is uncharacterized protein (290 aa).

Residues Leu67 to Ser210 are disordered. A compositionally biased stretch (basic and acidic residues) spans Arg121 to Arg130. Over residues Ala181–Ala190 the composition is skewed to low complexity. Over residues Asn191–Leu200 the composition is skewed to polar residues.

This is an uncharacterized protein from Homo sapiens (Human).